The following is a 306-amino-acid chain: Leucotoxin LukEv (306 aa).

The N-terminal stretch at 1–23 (MLAATLSVGLIAPLASPIQESRA) is a signal peptide.

The protein belongs to the aerolysin family. As to quaternary structure, toxicity requires sequential binding and synergistic association of a class S and a class F component which form heterooligomeric complexes. LukEv (class S) associates with LukDv (class F).

Its subcellular location is the secreted. Its function is as follows. Part of a bi-component leucotoxin that acts by forming pores in the membrane of the target cells. The activity of LukEv-LukDv to rabbit leukocytes is similar to that of the Panton-Valentine leucocidin (PVL). LukEv-LukDv is hemolytic to rabbit red blood cells although the activity is only 8% of gamma-hemolysin. This Staphylococcus aureus (strain NCTC 8325 / PS 47) protein is Leucotoxin LukEv (lukEv).